A 122-amino-acid chain; its full sequence is Flagellar protein FliT (122 aa).

Residues 1–50 (MTSTVEFINRWQRIALLSQSLLELAQRGEWDLLLQQEVSYLQSIETVMEK) form a required for homodimerization region. The segment at 60–98 (IQDMVAGYIKQTLDNEQLLKGLLQQRLDELSSLIGQSTR) is fliD binding.

The protein belongs to the FliT family. Homodimer. Interacts with FliD and FlhC.

Its subcellular location is the cytoplasm. The protein localises to the cytosol. In terms of biological role, dual-function protein that regulates the transcription of class 2 flagellar operons and that also acts as an export chaperone for the filament-capping protein FliD. As a transcriptional regulator, acts as an anti-FlhDC factor; it directly binds FlhC, thus inhibiting the binding of the FlhC/FlhD complex to class 2 promoters, resulting in decreased expression of class 2 flagellar operons. As a chaperone, effects FliD transition to the membrane by preventing its premature polymerization, and by directing it to the export apparatus. In Salmonella schwarzengrund (strain CVM19633), this protein is Flagellar protein FliT.